The primary structure comprises 429 residues: Trigger factor (429 aa).

A PPIase FKBP-type domain is found at 161–246 (EDRVTIDFTG…LKKVEERELP (86 aa)).

Belongs to the FKBP-type PPIase family. Tig subfamily. In terms of assembly, homodimer and monomer. In vivo most of the ribosomes are in complex with monomeric TF. Uncomplexed TF, however, is in a monomer-dimer equilibrium with approximately two thirds of TF existing in a dimeric state.

The protein resides in the cytoplasm. It catalyses the reaction [protein]-peptidylproline (omega=180) = [protein]-peptidylproline (omega=0). Functionally, involved in protein export. Acts as a chaperone by maintaining the newly synthesized protein in an open conformation. Functions as a peptidyl-prolyl cis-trans isomerase. The protein is Trigger factor of Escherichia coli O45:K1 (strain S88 / ExPEC).